The chain runs to 360 residues: Histidinol-phosphate aminotransferase (360 aa).

N6-(pyridoxal phosphate)lysine is present on lysine 213.

It belongs to the class-II pyridoxal-phosphate-dependent aminotransferase family. Histidinol-phosphate aminotransferase subfamily. As to quaternary structure, homodimer. The cofactor is pyridoxal 5'-phosphate.

The catalysed reaction is L-histidinol phosphate + 2-oxoglutarate = 3-(imidazol-4-yl)-2-oxopropyl phosphate + L-glutamate. It participates in amino-acid biosynthesis; L-histidine biosynthesis; L-histidine from 5-phospho-alpha-D-ribose 1-diphosphate: step 7/9. This is Histidinol-phosphate aminotransferase from Baumannia cicadellinicola subsp. Homalodisca coagulata.